The following is a 478-amino-acid chain: Probable cytosolic Fe-S cluster assembly factor CPIJ010948 (478 aa).

Positions 23, 69, 72, 75, 189, 245, 396, and 400 each coordinate [4Fe-4S] cluster.

The protein belongs to the NARF family.

Functionally, component of the cytosolic iron-sulfur (Fe/S) protein assembly machinery. Required for maturation of extramitochondrial Fe/S proteins. The sequence is that of Probable cytosolic Fe-S cluster assembly factor CPIJ010948 from Culex quinquefasciatus (Southern house mosquito).